A 744-amino-acid polypeptide reads, in one-letter code: Elongation factor G, mitochondrial (744 aa).

The 278-residue stretch at E39 to G316 folds into the tr-type G domain. GTP-binding positions include A48–T55, D115–H119, and N169–D172. Residues V725–S735 show a composition bias toward polar residues. The segment at V725–N744 is disordered.

It belongs to the TRAFAC class translation factor GTPase superfamily. Classic translation factor GTPase family. EF-G/EF-2 subfamily.

It localises to the mitochondrion. It participates in protein biosynthesis; polypeptide chain elongation. Its function is as follows. Mitochondrial GTPase that catalyzes the GTP-dependent ribosomal translocation step during translation elongation. During this step, the ribosome changes from the pre-translocational (PRE) to the post-translocational (POST) state as the newly formed A-site-bound peptidyl-tRNA and P-site-bound deacylated tRNA move to the P and E sites, respectively. Catalyzes the coordinated movement of the two tRNA molecules, the mRNA and conformational changes in the ribosome. Essential during development as it acts as a retrograde signal from mitochondria to the nucleus to slow down cell proliferation if mitochondrial energy output is low. The polypeptide is Elongation factor G, mitochondrial (Drosophila pseudoobscura pseudoobscura (Fruit fly)).